The primary structure comprises 278 residues: Membrane protein insertase YidC 2 (278 aa).

The first 18 residues, 1-18, serve as a signal peptide directing secretion; it reads MHKRLFITLLGFIILLAG. Cys-19 carries the N-palmitoyl cysteine lipid modification. Cys-19 carries S-diacylglycerol cysteine lipidation. Transmembrane regions (helical) follow at residues 55 to 75, 132 to 152, 176 to 196, and 224 to 244; these read GFAI…FMLI, MLGC…YMSL, LIMT…NSIH, and AAAL…QMHF.

The protein belongs to the OXA1/ALB3/YidC family. Type 2 subfamily.

The protein resides in the cell membrane. In terms of biological role, required for the insertion and/or proper folding and/or complex formation of integral membrane proteins into the membrane. Involved in integration of membrane proteins that insert both dependently and independently of the Sec translocase complex, as well as at least some lipoproteins. This Staphylococcus epidermidis (strain ATCC 12228 / FDA PCI 1200) protein is Membrane protein insertase YidC 2.